We begin with the raw amino-acid sequence, 140 residues long: Nucleoside diphosphate kinase (140 aa).

Residues Lys11, Phe59, Arg87, Thr93, Arg104, and Asn114 each contribute to the ATP site. Residue His117 is the Pros-phosphohistidine intermediate of the active site.

Belongs to the NDK family. In terms of assembly, homotetramer. Mg(2+) is required as a cofactor.

It is found in the cytoplasm. The enzyme catalyses a 2'-deoxyribonucleoside 5'-diphosphate + ATP = a 2'-deoxyribonucleoside 5'-triphosphate + ADP. It catalyses the reaction a ribonucleoside 5'-diphosphate + ATP = a ribonucleoside 5'-triphosphate + ADP. In terms of biological role, major role in the synthesis of nucleoside triphosphates other than ATP. The ATP gamma phosphate is transferred to the NDP beta phosphate via a ping-pong mechanism, using a phosphorylated active-site intermediate. This chain is Nucleoside diphosphate kinase, found in Rickettsia bellii (strain OSU 85-389).